The following is a 465-amino-acid chain: Putative multidrug resistance protein MdtD (465 aa).

A run of 12 helical transmembrane segments spans residues 12-32, 49-69, 72-92, 138-158, 165-185, 195-215, 219-239, 267-287, 290-310, 329-351, 393-413, and 430-450; these read LWIV…VNTA, SVIV…GWLA, IGVK…SLMC, FVTL…GFLV, WIFL…LLLM, FDIS…LALD, GLGL…IALG, LVGS…TPIF, IGLG…IIGS, VLVN…AIMG, LLSM…GILL, and SAFL…ALIF.

This sequence belongs to the major facilitator superfamily. TCR/Tet family.

Its subcellular location is the cell inner membrane. The protein is Putative multidrug resistance protein MdtD of Yersinia pseudotuberculosis serotype I (strain IP32953).